The primary structure comprises 453 residues: Pup--protein ligase (453 aa).

Mg(2+) is bound at residue Glu-9. Arg-53 contacts ATP. Tyr-55 contributes to the Mg(2+) binding site. The active-site Proton acceptor is Asp-57. Glu-63 serves as a coordination point for Mg(2+). The ATP site is built by Thr-66 and Trp-420.

Belongs to the Pup ligase/Pup deamidase family. Pup-conjugating enzyme subfamily.

It catalyses the reaction ATP + [prokaryotic ubiquitin-like protein]-L-glutamate + [protein]-L-lysine = ADP + phosphate + N(6)-([prokaryotic ubiquitin-like protein]-gamma-L-glutamyl)-[protein]-L-lysine.. It participates in protein degradation; proteasomal Pup-dependent pathway. The protein operates within protein modification; protein pupylation. Catalyzes the covalent attachment of the prokaryotic ubiquitin-like protein modifier Pup to the proteasomal substrate proteins, thereby targeting them for proteasomal degradation. This tagging system is termed pupylation. The ligation reaction involves the side-chain carboxylate of the C-terminal glutamate of Pup and the side-chain amino group of a substrate lysine. The chain is Pup--protein ligase from Streptomyces coelicolor (strain ATCC BAA-471 / A3(2) / M145).